The chain runs to 550 residues: Warthog protein 8 (550 aa).

Residues 1-19 form the signal peptide; it reads MNYLLLVSGLLSVWQPVFG.

It belongs to the hedgehog family. The C-terminal domain displays an autoproteolysis activity.

Its subcellular location is the secreted. It localises to the cell surface. It is found in the cell membrane. The protein localises to the extracellular space. Functionally, intercellular signal essential for a variety of patterning events during development. The polypeptide is Warthog protein 8 (wrt-8) (Caenorhabditis elegans).